Here is a 352-residue protein sequence, read N- to C-terminus: Phosphoribosylformylglycinamidine cyclo-ligase (352 aa).

Belongs to the AIR synthase family.

The protein localises to the cytoplasm. It catalyses the reaction 2-formamido-N(1)-(5-O-phospho-beta-D-ribosyl)acetamidine + ATP = 5-amino-1-(5-phospho-beta-D-ribosyl)imidazole + ADP + phosphate + H(+). Its pathway is purine metabolism; IMP biosynthesis via de novo pathway; 5-amino-1-(5-phospho-D-ribosyl)imidazole from N(2)-formyl-N(1)-(5-phospho-D-ribosyl)glycinamide: step 2/2. This Nitrosospira multiformis (strain ATCC 25196 / NCIMB 11849 / C 71) protein is Phosphoribosylformylglycinamidine cyclo-ligase.